Here is an 856-residue protein sequence, read N- to C-terminus: MSNSQLQPESLAEYLAHLPMSDQQRAELAGCQSFSELHQRLSSSTFDGPTDAAQASVGQRLTLSTAAELEEAEMLAVDAEGRVCLKATPPIRRTKVVPEPWRTNILVRGWRRLTGRTNPPAPKKDERVLPAARWRTVGSIRRYILLVLMLGQTIVAGWYMKGIMPYQGWSFVDLEEVMHQPLMQTAQQVLPYALQTSILILFGILFCWVSAGFWTALMGFLELLTGHDKYRISGASAGNEPIPKDARTALVMPICNEDVPRVFAGLRATFESVAATGDLDRFDFFVLSDSNDSDICVAEQQAWLDVCREAKGFGKIFYRRRRRRVKRKSGNLDDFCRRWGGDYKYMVVLDADSVMSGECLTSLVRLMEATPDAGIIQTAPRASGMDTLYARMQQFATRVYGPLFTAGLHFWQLGESHYWGHNAIIRMQPFIEHCALAPLPGKGAFAGAILSHDFVEAALMRRAGWGVWIAYDLPGSYEELPPNLLDELKRDRRWCHGNLMNFRLFLVKGMHPVHRAVFLTGVMSYLSAPLWFFFLVLSTALLAVNTLMEPQYFLEPRQLYPLWPQWHPDKAIALFSTTIVLLFLPKLLSIILIWAKGAKEFGGKFKVTLSMLLEMLFSMLLAPVRMIFHTRFVLAAFLGWAATWNSPQRDDDSTPWSEAVKRHGPQTLLGFCWALLVIWLNPSFLWWLVPIVGSLMLSIPVSVISSRVGLGLKSRDESLFLIPEEYAPPQALLATDQYTHENRWHALNDGFVRAVVDPQQNALACALATSRHTQAEPIEWLRQERVRHALKVGPAALNNSERLALLSDPVALGRLHEQVWSEGHSEWLSAWRQSVDADPHAPLLPLQPLNAAPQPA.

Helical transmembrane passes span 144–164 (ILLV…KGIM), 198–218 (ILIL…TALM), 517–537 (VFLT…FLVL), 574–594 (LFST…ILIW), 608–628 (TLSM…RMIF), and 684–704 (FLWW…VSVI).

It belongs to the glycosyltransferase 2 family. OpgH subfamily.

The protein resides in the cell inner membrane. The protein operates within glycan metabolism; osmoregulated periplasmic glucan (OPG) biosynthesis. In terms of biological role, involved in the biosynthesis of osmoregulated periplasmic glucans (OPGs). This Pseudomonas fluorescens (strain ATCC BAA-477 / NRRL B-23932 / Pf-5) protein is Glucans biosynthesis glucosyltransferase H.